The following is a 553-amino-acid chain: Methionine--tRNA ligase (553 aa).

Residues 12–22 (PYANSQLHLGH) carry the 'HIGH' region motif. Zn(2+)-binding residues include cysteine 144, cysteine 147, cysteine 157, and cysteine 160. A 'KMSKS' region motif is present at residues 332-336 (KFSKS). Position 335 (lysine 335) interacts with ATP.

Belongs to the class-I aminoacyl-tRNA synthetase family. MetG type 1 subfamily. As to quaternary structure, monomer. The cofactor is Zn(2+).

Its subcellular location is the cytoplasm. It catalyses the reaction tRNA(Met) + L-methionine + ATP = L-methionyl-tRNA(Met) + AMP + diphosphate. Is required not only for elongation of protein synthesis but also for the initiation of all mRNA translation through initiator tRNA(fMet) aminoacylation. This Dehalococcoides mccartyi (strain CBDB1) protein is Methionine--tRNA ligase.